We begin with the raw amino-acid sequence, 410 residues long: Protein king tubby 2 (410 aa).

The span at 48–72 (SPNNPDQILTSTGNASITTTPTSPY) shows a compositional bias: polar residues. Disordered stretches follow at residues 48-109 (SPNN…STRH) and 121-159 (ISPA…EGDV). A compositionally biased stretch (basic and acidic residues) spans 132–143 (SHHDSSSGKSVE).

This sequence belongs to the TUB family.

It localises to the cytoplasm. It is found in the nucleus. This Aedes aegypti (Yellowfever mosquito) protein is Protein king tubby 2 (king-tubby2).